A 276-amino-acid chain; its full sequence is Glutamate racemase (276 aa).

Residues Asp12–Ser13 and Tyr44–Gly45 contribute to the substrate site. The Proton donor/acceptor role is filled by Cys76. Asn77–Thr78 is a substrate binding site. Cys187 functions as the Proton donor/acceptor in the catalytic mechanism. Thr188–His189 is a binding site for substrate.

This sequence belongs to the aspartate/glutamate racemases family.

The enzyme catalyses L-glutamate = D-glutamate. It functions in the pathway cell wall biogenesis; peptidoglycan biosynthesis. In terms of biological role, provides the (R)-glutamate required for cell wall biosynthesis. This Granulibacter bethesdensis (strain ATCC BAA-1260 / CGDNIH1) protein is Glutamate racemase.